A 320-amino-acid chain; its full sequence is D-alanine--D-alanine ligase (320 aa).

The ATP-grasp domain occupies 104-308 (KRVCLSHGVP…YEDLCVEILR (205 aa)). 134 to 189 (AAEFGMPLMLKAPHEGSTIGIAKVETAEGMQAGFDLCAKYDDVVLVEQFVKGRELT) contributes to the ATP binding site. Mg(2+)-binding residues include Asp261, Glu275, and Asn277.

This sequence belongs to the D-alanine--D-alanine ligase family. Mg(2+) is required as a cofactor. The cofactor is Mn(2+).

The protein localises to the cytoplasm. The catalysed reaction is 2 D-alanine + ATP = D-alanyl-D-alanine + ADP + phosphate + H(+). It participates in cell wall biogenesis; peptidoglycan biosynthesis. Cell wall formation. This chain is D-alanine--D-alanine ligase, found in Janthinobacterium sp. (strain Marseille) (Minibacterium massiliensis).